Reading from the N-terminus, the 285-residue chain is Secreted alkaline triacylglycerol lipase (285 aa).

An N-terminal signal peptide occupies residues 1-20 (MLFNYQSLLVGVSLISQALS). The active-site Nucleophile is the Ser159. Catalysis depends on charge relay system residues Asp215 and His268.

The protein belongs to the AB hydrolase superfamily. FaeA family.

Its subcellular location is the secreted. It carries out the reaction a triacylglycerol + H2O = a diacylglycerol + a fatty acid + H(+). In terms of biological role, secreted alkaline lipase that hydrolyzes acylglycerol lipids such as triacylglycerols and consequently releases free fatty acid. Is able to hydrolyze tributyrin (1,2,3-tributyryl-glycerin). In Penicillium cyclopium, this protein is Secreted alkaline triacylglycerol lipase.